The sequence spans 952 residues: Inter-alpha-trypsin inhibitor heavy chain H5 (952 aa).

The signal sequence occupies residues 1–17; sequence MLLLLGLCLGLPLFSES. The VIT domain occupies 35–161; the sequence is VPRQLRLLQR…KAAFFLSYEE (127 aa). 4 N-linked (GlcNAc...) asparagine glycosylation sites follow: Asn-97, Asn-127, Asn-136, and Asn-231. Basic and acidic residues predominate over residues 113–131; that stretch reads QKDKKSSESVKDKRNRTSD. Residues 113-138 form a disordered region; that stretch reads QKDKKSSESVKDKRNRTSDDNEENGS. Positions 295-478 constitute a VWFA domain; the sequence is NVVFVLDISA…AQLIGFYDEI (184 aa). Residues Asn-508, Asn-776, Asn-795, and Asn-862 are each glycosylated (N-linked (GlcNAc...) asparagine). A disordered region spans residues 933–952; that stretch reads ALGLSTPRKPETDRPHEESV. The segment covering 940–952 has biased composition (basic and acidic residues); that stretch reads RKPETDRPHEESV.

The protein belongs to the ITIH family.

Its subcellular location is the secreted. Its function is as follows. May act as a tumor suppressor. The sequence is that of Inter-alpha-trypsin inhibitor heavy chain H5 (Itih5) from Mus musculus (Mouse).